The primary structure comprises 116 residues: Chorion protein S15 (116 aa).

Residues 1 to 18 form the signal peptide; sequence MKFLIAFAVLALVACINA.

It belongs to the chorion protein S15/S18 family.

The protein resides in the secreted. Chorion membrane (egg shell) protein; plays a role in protecting the egg from the environment. In Drosophila virilis (Fruit fly), this protein is Chorion protein S15 (Cp15).